The chain runs to 196 residues: Dephospho-CoA kinase (196 aa).

In terms of domain architecture, DPCK spans 6–196 (AIALTGGIGT…QVERFLKTLL (191 aa)). Position 14–19 (14–19 (GTGKST)) interacts with ATP.

It belongs to the CoaE family.

It is found in the cytoplasm. The catalysed reaction is 3'-dephospho-CoA + ATP = ADP + CoA + H(+). It participates in cofactor biosynthesis; coenzyme A biosynthesis; CoA from (R)-pantothenate: step 5/5. In terms of biological role, catalyzes the phosphorylation of the 3'-hydroxyl group of dephosphocoenzyme A to form coenzyme A. In Helicobacter pylori (strain J99 / ATCC 700824) (Campylobacter pylori J99), this protein is Dephospho-CoA kinase.